Here is a 306-residue protein sequence, read N- to C-terminus: MIFQRTVKEMVKTTGVGLHSGNKVTLTIKPAPVNTGIVLVRTDLTPSVAIAAKADQVRETTMCTALVNDEGVRISTIEHLFAALAGLGIDNATIEVDAPEIPIMDGSASPWVFLLQSVGIQEQSAAKKYLRIKRPVRVEDGDKWAELRPFKGFRVDFAIDFNHPEIARSQQHMVMDFSSSAFVRDISRARTFGFMRDIEYLRANNLALGGSMENAVVLDEYRVLNPDGLRYEDEFVKHKILDAFGDLYVAGHAIVGEFRAFKTGHALNNQLVRALLAEQDAWELVSFEKEEEVPVSFAVPAGAVLA.

Positions 79, 238, and 242 each coordinate Zn(2+). His-265 (proton donor) is an active-site residue.

Belongs to the LpxC family. Zn(2+) is required as a cofactor.

It catalyses the reaction a UDP-3-O-[(3R)-3-hydroxyacyl]-N-acetyl-alpha-D-glucosamine + H2O = a UDP-3-O-[(3R)-3-hydroxyacyl]-alpha-D-glucosamine + acetate. It functions in the pathway glycolipid biosynthesis; lipid IV(A) biosynthesis; lipid IV(A) from (3R)-3-hydroxytetradecanoyl-[acyl-carrier-protein] and UDP-N-acetyl-alpha-D-glucosamine: step 2/6. Functionally, catalyzes the hydrolysis of UDP-3-O-myristoyl-N-acetylglucosamine to form UDP-3-O-myristoylglucosamine and acetate, the committed step in lipid A biosynthesis. The polypeptide is UDP-3-O-acyl-N-acetylglucosamine deacetylase (Shewanella loihica (strain ATCC BAA-1088 / PV-4)).